We begin with the raw amino-acid sequence, 455 residues long: P2X purinoceptor 5 (455 aa).

Topologically, residues 1–30 (MGQAAWKGFVLSLFDYKTAKFVVAKSKKVG) are cytoplasmic. A helical transmembrane segment spans residues 31–50 (LLYRVLQLTILLYLLIWVFL). The Extracellular portion of the chain corresponds to 51-339 (IKKSYQDIDT…KFSIIPTVIN (289 aa)). 69-71 (KVK) contacts ATP. A glycan (N-linked (GlcNAc...) asparagine) is linked at N77. Cystine bridges form between C118–C169, C129–C152, and C135–C163. N157 carries N-linked (GlcNAc...) asparagine glycosylation. T189 provides a ligand contact to ATP. N-linked (GlcNAc...) asparagine glycosylation is present at N202. 2 disulfides stabilise this stretch: C220-C229 and C263-C272. ATP is bound by residues 294-296 (NFR) and K314. The helical transmembrane segment at 340-362 (IGSGLALMGAGAFFCDLVLIYLI) threads the bilayer. The Cytoplasmic portion of the chain corresponds to 363 to 455 (RKSEFYRDKK…PSQILQTVKT (93 aa)).

The protein belongs to the P2X receptor family. Functional P2XRs are organized as homomeric and heteromeric trimers. Homotrimer. Forms heterotrimer with P2RX1. As to expression, expressed in a number of tissues, with highest levels detected in heart and kidney.

It is found in the cell membrane. It catalyses the reaction Na(+)(in) = Na(+)(out). It carries out the reaction Ca(2+)(in) = Ca(2+)(out). The enzyme catalyses chloride(in) = chloride(out). Activated by ATP. Slowly desensitizing. Not activated by ATP agonist alpha/beta-methylene-ATP. Highly sensitive to the antagonists suramin and PPADS. In terms of biological role, ATP-gated nonselective transmembrane cation channel permeable to potassium, sodium and calcium. Unlike other P2RX receptors, the P2X5 receptor is also permeable to chloride. Acts as an important regulator of inflammatory-related bone loss and osteoclast multinucleation. This chain is P2X purinoceptor 5, found in Mus musculus (Mouse).